A 336-amino-acid polypeptide reads, in one-letter code: F-box protein PP2-B1 (336 aa).

The tract at residues 1 to 22 (MEQIHGGDSNSGGGGGGSSRND) is disordered. Gly residues predominate over residues 9-18 (SNSGGGGGGS). An F-box domain is found at 29 to 75 (ASRFDALPEDCISKVISHTSPRDACVVASVSKSVKSAAQSDLVWEMF).

In terms of assembly, part of a SCF (ASK-cullin-F-box) protein ligase complex. Interacts with SKP1A/ASK1 and SPK1B/ASK2.

It localises to the nucleus. The protein operates within protein modification; protein ubiquitination. Functionally, component of SCF(ASK-cullin-F-box) E3 ubiquitin ligase complexes, which may mediate the ubiquitination and subsequent proteasomal degradation of target proteins. This chain is F-box protein PP2-B1 (PP2B1), found in Arabidopsis thaliana (Mouse-ear cress).